A 332-amino-acid polypeptide reads, in one-letter code: Methionine import ATP-binding protein MetN (332 aa).

One can recognise an ABC transporter domain in the interval 2–241 (IELKGLTKVF…PGSRLRELFY (240 aa)). 38-45 (GQSGAGKS) lines the ATP pocket.

It belongs to the ABC transporter superfamily. Methionine importer (TC 3.A.1.24) family. As to quaternary structure, the complex is composed of two ATP-binding proteins (MetN), two transmembrane proteins (MetI) and a solute-binding protein (MetQ).

The protein resides in the cell membrane. It catalyses the reaction L-methionine(out) + ATP + H2O = L-methionine(in) + ADP + phosphate + H(+). The catalysed reaction is D-methionine(out) + ATP + H2O = D-methionine(in) + ADP + phosphate + H(+). Part of the ABC transporter complex MetNIQ involved in methionine import. Responsible for energy coupling to the transport system. The sequence is that of Methionine import ATP-binding protein MetN from Symbiobacterium thermophilum (strain DSM 24528 / JCM 14929 / IAM 14863 / T).